Here is a 346-residue protein sequence, read N- to C-terminus: Nicotinate-nucleotide--dimethylbenzimidazole phosphoribosyltransferase (346 aa).

Residue Glu-312 is the Proton acceptor of the active site.

Belongs to the CobT family.

The catalysed reaction is 5,6-dimethylbenzimidazole + nicotinate beta-D-ribonucleotide = alpha-ribazole 5'-phosphate + nicotinate + H(+). The protein operates within nucleoside biosynthesis; alpha-ribazole biosynthesis; alpha-ribazole from 5,6-dimethylbenzimidazole: step 1/2. Catalyzes the synthesis of alpha-ribazole-5'-phosphate from nicotinate mononucleotide (NAMN) and 5,6-dimethylbenzimidazole (DMB). The sequence is that of Nicotinate-nucleotide--dimethylbenzimidazole phosphoribosyltransferase from Cupriavidus taiwanensis (strain DSM 17343 / BCRC 17206 / CCUG 44338 / CIP 107171 / LMG 19424 / R1) (Ralstonia taiwanensis (strain LMG 19424)).